Here is a 198-residue protein sequence, read N- to C-terminus: Segregation and condensation protein B (198 aa).

The protein belongs to the ScpB family. In terms of assembly, homodimer. Homodimerization may be required to stabilize the binding of ScpA to the Smc head domains. Component of a cohesin-like complex composed of ScpA, ScpB and the Smc homodimer, in which ScpA and ScpB bind to the head domain of Smc. The presence of the three proteins is required for the association of the complex with DNA.

The protein localises to the cytoplasm. Its function is as follows. Participates in chromosomal partition during cell division. May act via the formation of a condensin-like complex containing Smc and ScpA that pull DNA away from mid-cell into both cell halves. The protein is Segregation and condensation protein B of Acetivibrio thermocellus (strain ATCC 27405 / DSM 1237 / JCM 9322 / NBRC 103400 / NCIMB 10682 / NRRL B-4536 / VPI 7372) (Clostridium thermocellum).